Consider the following 159-residue polypeptide: Vesicle transport protein SFT2A (159 aa).

Residues 1-36 (MEKLRRVLSGQDDEEQGLTAQVLDASSLSFNTRLKW) lie on the Cytoplasmic side of the membrane. At serine 9 the chain carries Phosphoserine. A helical transmembrane segment spans residues 37–57 (FAICFVCGVFFSILGTGLLWL). Residues 58–62 (PGGIK) are Lumenal-facing. The chain crosses the membrane as a helical span at residues 63–83 (LFAVFYTLGNLAALASTCFLM). Residues 84–97 (GPVKQLKKMFEATR) lie on the Cytoplasmic side of the membrane. The chain crosses the membrane as a helical span at residues 98–118 (LLATIVMLLCFIFTLCAALWW). Over 119–122 (HKKG) the chain is Lumenal. A helical membrane pass occupies residues 123-143 (LAVLFCILQFLSMTWYSLSYI). At 144–159 (PYARDAVIKCCSSLLS) the chain is on the cytoplasmic side.

The protein belongs to the SFT2 family.

It localises to the membrane. May be involved in fusion of retrograde transport vesicles derived from an endocytic compartment with the Golgi complex. The polypeptide is Vesicle transport protein SFT2A (Homo sapiens (Human)).